The chain runs to 311 residues: Nucleotide-binding protein Acel_1111 (311 aa).

An ATP-binding site is contributed by 30-37 (GLSGAGRS). 81 to 84 (DVRS) contributes to the GTP binding site.

The protein belongs to the RapZ-like family.

Its function is as follows. Displays ATPase and GTPase activities. This Acidothermus cellulolyticus (strain ATCC 43068 / DSM 8971 / 11B) protein is Nucleotide-binding protein Acel_1111.